A 256-amino-acid chain; its full sequence is Chlorophyll a-b binding protein CP24 10B, chloroplastic (256 aa).

A chloroplast-targeting transit peptide spans 1–45 (MTTTSATAVLNGLSSSFLTGGKKTQALLGAHVTARVTTPKRFVVA). A run of 2 helical transmembrane segments spans residues 106 to 126 (WAMA…IPWF) and 134 to 154 (AIAP…MGWV).

Belongs to the ELIP/psbS family.

The protein resides in the plastid. Its subcellular location is the chloroplast thylakoid membrane. The protein is Chlorophyll a-b binding protein CP24 10B, chloroplastic (CAP10B) of Solanum lycopersicum (Tomato).